A 1057-amino-acid polypeptide reads, in one-letter code: Probable sucrose-phosphate synthase 1 (1057 aa).

Basic and acidic residues predominate over residues 103–115 (RRLERERGRREAT). 3 disordered regions span residues 103 to 143 (RRLE…STRS), 439 to 459 (PQDGDMDGETEGNEDNPASPD), and 670 to 693 (RHPQWQRTDDGGETSESDSPGDSL). Acidic residues predominate over residues 442 to 452 (GDMDGETEGNE).

The protein belongs to the glycosyltransferase 1 family. In terms of assembly, homodimer or homotetramer.

The enzyme catalyses beta-D-fructose 6-phosphate + UDP-alpha-D-glucose = sucrose 6(F)-phosphate + UDP + H(+). Its pathway is glycan biosynthesis; sucrose biosynthesis; sucrose from D-fructose 6-phosphate and UDP-alpha-D-glucose: step 1/2. Its activity is regulated as follows. Activity is regulated by phosphorylation and moderated by concentration of metabolites and light. Plays a role in photosynthetic sucrose synthesis by catalyzing the rate-limiting step of sucrose biosynthesis from UDP-glucose and fructose- 6-phosphate. Involved in the regulation of carbon partitioning in the leaves of plants. May regulate the synthesis of sucrose and therefore play a major role as a limiting factor in the export of photoassimilates out of the leaf. Plays a role for sucrose availability that is essential for plant growth and fiber elongation. The sequence is that of Probable sucrose-phosphate synthase 1 (SPS1) from Citrus unshiu (Satsuma mandarin).